A 622-amino-acid chain; its full sequence is Sodium-coupled monocarboxylate transporter 1 (622 aa).

Residues 1–15 lie on the Extracellular side of the membrane; sequence MVTPGNIGSFTVWDY. The helical transmembrane segment at 16 to 36 threads the bilayer; the sequence is LVFALMLLISAVIGIYYAFAG. The Cytoplasmic segment spans residues 37–51; that stretch reads GGQKTSKDFLMGGRS. The chain crosses the membrane as a helical span at residues 52–72; the sequence is MTAVPVALSLTASFMSAVTVL. At 73-83 the chain is on the extracellular side; the sequence is GTPAEVYRFGA. Residues 84–104 form a helical membrane-spanning segment; that stretch reads MFIIFAFSYTIVVIISSEVFL. At 105–128 the chain is on the cytoplasmic side; it reads PVFYRLGITSTYEYLELRFNKFVR. The chain crosses the membrane as a helical span at residues 129–149; that stretch reads LLGTILFIIQTVLYTGIVIYA. Topologically, residues 150–161 are extracellular; that stretch reads PALALNQVTGFD. Residues 162-182 form a helical membrane-spanning segment; it reads LWGAVVATGVVCTFYCTMGGL. The Cytoplasmic segment spans residues 183-184; the sequence is KA. Residues 185-205 form a helical membrane-spanning segment; that stretch reads VVWTDVFQVGIMVAGFTSVII. Over 206–241 the chain is Extracellular; the sequence is RAVVVQGGIGPILNDSYYGDRLNFWDFDPNPLKRHT. An N-linked (GlcNAc...) asparagine glycan is attached at asparagine 219. The helical transmembrane segment at 242–262 threads the bilayer; the sequence is FWTIVVGGTFTWTGIYGVNQA. Residues 263–283 are Cytoplasmic-facing; that stretch reads QVQRYIACKTRFQAKMSLYVN. Residues 284–304 traverse the membrane as a helical segment; that stretch reads LIGLWAILACAVLSGLAMYSI. Residues 305–336 are Extracellular-facing; it reads YKDCDPWTAKFVSAPDQLMPYLALDILRDYPG. A helical transmembrane segment spans residues 337 to 357; sequence LPGLFVSCAYSGTLSTVSSSI. Over 358–389 the chain is Cytoplasmic; it reads NALAAVTVEDLIKPYIRSLSEKKMSWISKGTS. A helical membrane pass occupies residues 390–410; that stretch reads LLYGAICIGMAGIASLMGGLL. At 411–415 the chain is on the extracellular side; the sequence is QAALS. A helical membrane pass occupies residues 416–436; sequence IFGMVGGPLLGLFSLGILFPF. Residues 437–438 are Cytoplasmic-facing; that stretch reads VN. Residues 439–459 traverse the membrane as a helical segment; the sequence is SLGAVIGLLSGFAISLWVGIG. Over 460 to 521 the chain is Extracellular; that stretch reads SQIYAPSPSS…LADSWYSLSY (62 aa). Asparagine 481 and asparagine 488 each carry an N-linked (GlcNAc...) asparagine glycan. The chain crosses the membrane as a helical span at residues 522–542; sequence LYFSTIGTIVAVLVGVIVSLL. Residues 543 to 622 are Cytoplasmic-facing; it reads SGGLKQNVNR…KGEKTNGITA (80 aa). Residues 591–622 are disordered; the sequence is DNDMEQGTDNPAFNNMEMTSTEKGEKTNGITA. The segment covering 595–609 has biased composition (polar residues); that stretch reads EQGTDNPAFNNMEMT.

It belongs to the sodium:solute symporter (SSF) (TC 2.A.21) family. In the gastrula and neurula stages, expressed in the gastrula anterior endoderm and in the entire circumference of the blastopore lip superficial endoderm. At tailbud stages, abundant expression observed in the ventral midgut region. As development proceeds expression becomes restricted to the liver diverticulum and ultimately to the presumptive gallbladder, by tadpole stage 35. Also present in pronephros and the tip of the tail.

The protein localises to the apical cell membrane. It carries out the reaction (S)-lactate(out) + 2 Na(+)(out) = (S)-lactate(in) + 2 Na(+)(in). The catalysed reaction is propanoate(out) + 2 Na(+)(out) = propanoate(in) + 2 Na(+)(in). It catalyses the reaction pyruvate(out) + 2 Na(+)(out) = pyruvate(in) + 2 Na(+)(in). The enzyme catalyses acetate(out) + 2 Na(+)(out) = acetate(in) + 2 Na(+)(in). It carries out the reaction butanoate(out) + 2 Na(+)(out) = butanoate(in) + 2 Na(+)(in). The catalysed reaction is nicotinate(out) + 2 Na(+)(out) = nicotinate(in) + 2 Na(+)(in). It catalyses the reaction (R)-3-hydroxybutanoate(out) + 2 Na(+)(out) = (R)-3-hydroxybutanoate(in) + 2 Na(+)(in). The enzyme catalyses acetoacetate(out) + 2 Na(+)(out) = acetoacetate(in) + 2 Na(+)(in). It carries out the reaction 4-methyl-2-oxopentanoate(out) + 2 Na(+)(out) = 4-methyl-2-oxopentanoate(in) + 2 Na(+)(in). The catalysed reaction is 5-oxo-L-proline(out) + 2 Na(+)(out) = 5-oxo-L-proline(in) + 2 Na(+)(in). It catalyses the reaction iodide(out) = iodide(in). The enzyme catalyses chloride(in) = chloride(out). It carries out the reaction nitrate(in) = nitrate(out). The catalysed reaction is bromide(in) = bromide(out). Functionally, acts as an electrogenic sodium (Na(+)) and chloride (Cl-)-dependent sodium-coupled solute transporter, including transport of monocarboxylates (short-chain fatty acids including L-lactate, D-lactate, pyruvate, acetate, propionate, valerate and butyrate), mocarboxylate drugs (nicotinate, benzoate, salicylate and 5-aminosalicylate) and ketone bodies (beta-D-hydroxybutyrate, acetoacetate and alpha-ketoisocaproate), with a Na(+):substrate stoichiometry of between 4:1 and 2:1. Catalyzes passive carrier mediated diffusion of iodide. Mediates iodide transport from the thyrocyte into the colloid lumen through the apical membrane. Mediates sodium-coupled electrogenic transport of pyroglutamate (5-oxo-L-proline). Can mediate the transport of chloride, bromide, iodide and nitrate ions when external concentration of sodium ions is reduced. In Xenopus laevis (African clawed frog), this protein is Sodium-coupled monocarboxylate transporter 1.